Here is a 639-residue protein sequence, read N- to C-terminus: Mediator of RNA polymerase II transcription subunit 17 (639 aa).

Over residues 32 to 43 (ASATVTTNGTTA) the composition is skewed to polar residues. Disordered regions lie at residues 32 to 68 (ASAT…EEHS) and 130 to 159 (MGDA…NNDS). Over residues 48-57 (DSGSQQSVSS) the composition is skewed to low complexity. Over residues 58–68 (APIQQNSEEHS) the composition is skewed to polar residues. Residues 245–271 (WKLRSLEDSKALLKENYAKLQKSLEVE) are a coiled coil.

This sequence belongs to the Mediator complex subunit 17 family. In terms of assembly, component of the Mediator complex.

It is found in the nucleus. Its function is as follows. Component of the Mediator complex, a coactivator involved in the regulated transcription of nearly all RNA polymerase II-dependent genes. Mediator functions as a bridge to convey information from gene-specific regulatory proteins to the basal RNA polymerase II transcription machinery. Mediator is recruited to promoters by direct interactions with regulatory proteins and serves as a scaffold for the assembly of a functional preinitiation complex with RNA polymerase II and the general transcription factors. This chain is Mediator of RNA polymerase II transcription subunit 17 (SRB4), found in Eremothecium gossypii (strain ATCC 10895 / CBS 109.51 / FGSC 9923 / NRRL Y-1056) (Yeast).